A 244-amino-acid polypeptide reads, in one-letter code: 7-cyano-7-deazaguanine synthase (244 aa).

Position 14–24 (14–24) interacts with ATP; sequence FSGGQDSATCV. Zn(2+) contacts are provided by Cys-202, Cys-217, Cys-220, and Cys-223.

It belongs to the QueC family. It depends on Zn(2+) as a cofactor.

The catalysed reaction is 7-carboxy-7-deazaguanine + NH4(+) + ATP = 7-cyano-7-deazaguanine + ADP + phosphate + H2O + H(+). It participates in purine metabolism; 7-cyano-7-deazaguanine biosynthesis. Functionally, catalyzes the ATP-dependent conversion of 7-carboxy-7-deazaguanine (CDG) to 7-cyano-7-deazaguanine (preQ(0)). This is 7-cyano-7-deazaguanine synthase from Burkholderia thailandensis (strain ATCC 700388 / DSM 13276 / CCUG 48851 / CIP 106301 / E264).